Here is a 126-residue protein sequence, read N- to C-terminus: Protein ApaG (126 aa).

The ApaG domain maps to 2-126 (TSLEDSIKVE…FRLAVPGMLH (125 aa)).

In Shewanella sediminis (strain HAW-EB3), this protein is Protein ApaG.